Reading from the N-terminus, the 880-residue chain is DNA mismatch repair protein MutS (880 aa).

631–638 serves as a coordination point for ATP; sequence GPNMAGKS. The interval 835–860 is disordered; it reads RAAPPPPAPAAPKTSPVEERLREIQP. Residues 850-860 are compositionally biased toward basic and acidic residues; the sequence is PVEERLREIQP.

The protein belongs to the DNA mismatch repair MutS family.

In terms of biological role, this protein is involved in the repair of mismatches in DNA. It is possible that it carries out the mismatch recognition step. This protein has a weak ATPase activity. The protein is DNA mismatch repair protein MutS of Cereibacter sphaeroides (strain ATCC 17029 / ATH 2.4.9) (Rhodobacter sphaeroides).